The following is a 614-amino-acid chain: High-affinity choline transporter 1 (614 aa).

A helical membrane pass occupies residues 6–26; the sequence is GVVSIVLFYLLILVVGIWAGR. Topologically, residues 27 to 44 are cytoplasmic; it reads KKQSGNDSEEEVMLAGRS. Residues 45 to 65 form a helical membrane-spanning segment; it reads IGLFVGIFTMTATWVGGGYIN. Topologically, residues 66 to 75 are extracellular; that stretch reads GTAEAIYTSG. Residues 76–96 traverse the membrane as a helical segment; sequence LVWCQAPFGYALSLVFGGIFF. At 97–119 the chain is on the cytoplasmic side; the sequence is ANPMRKQGYITMLDPLQDSFGER. The helical transmembrane segment at 120–140 threads the bilayer; that stretch reads MGGLLFLPALCGEVFWAAGIL. Residues 141–158 lie on the Extracellular side of the membrane; that stretch reads AALGATLSVIIDMDHRTS. The helical transmembrane segment at 159-179 threads the bilayer; that stretch reads VILSSCIAIFYTLFGGLYSVA. Over 180–185 the chain is Cytoplasmic; that stretch reads YTDVIQ. The chain crosses the membrane as a helical span at residues 186 to 206; that stretch reads LFCIFIGLWMCIPFAWSNEHV. Over 207–225 the chain is Extracellular; that stretch reads GSLSDLEVDWIGHVEPKKH. Residues 226–246 form a helical membrane-spanning segment; that stretch reads WLYIDYGLLLVFGGIPWQVYF. The Cytoplasmic segment spans residues 247–262; sequence QRVLSSKTAGRAQLLS. Residues 263–283 traverse the membrane as a helical segment; it reads YVAAAGCILMAIPPVLIGAIA. At 284–305 the chain is on the extracellular side; the sequence is KATPWNETDYKGPYPLTVDETS. A glycan (N-linked (GlcNAc...) asparagine) is linked at Asn289. Residues 306-326 traverse the membrane as a helical segment; that stretch reads MILPMVLQYLTPDFVSFFGLG. Topologically, residues 327-364 are cytoplasmic; the sequence is AVSAAVMSSADSSVLSAASMFARNVYKLIFRQKASEME. Residues 365 to 385 form a helical membrane-spanning segment; that stretch reads IIWVMRVAIIVVGILATIMAL. The Extracellular segment spans residues 386–394; that stretch reads TIPSIYGLW. The chain crosses the membrane as a helical span at residues 395–415; the sequence is SMCSDLVYVILFPQLLMVVHF. Residues 416-424 are Cytoplasmic-facing; it reads KKHCNTYGS. Residues 425 to 445 form a helical membrane-spanning segment; the sequence is LSAYIVALAIRLSGGEAILGL. The Extracellular segment spans residues 446–467; the sequence is APLIKYPGYDEETKEQMFPFRT. Residues 468–488 form a helical membrane-spanning segment; sequence MAMLLSLVTLISVSWWTKMMF. Residues 489–614 are Cytoplasmic-facing; sequence ESGKLPPSYD…PTAEQDNTAF (126 aa). Positions 583–614 are disordered; that stretch reads ATGVKPSGGGGGHLQSQSGMAMPTAEQDNTAF.

The protein belongs to the sodium:solute symporter (SSF) (TC 2.A.21) family.

It localises to the membrane. Functionally, imports choline from the extracellular space to the neuron with high affinity. Rate-limiting step in acetylcholine synthesis. Sodium ion and chloride ion dependent. This is High-affinity choline transporter 1 from Drosophila melanogaster (Fruit fly).